Consider the following 204-residue polypeptide: Somatotropin (204 aa).

The signal sequence occupies residues M1 to S17. The residue at position 18 (Q18) is a Pyrrolidone carboxylic acid. H36 is a Zn(2+) binding site. A disulfide bridge links C69 with C177. Residue E186 coordinates Zn(2+). A disulfide bond links C194 and C202.

The protein belongs to the somatotropin/prolactin family.

Its subcellular location is the secreted. In terms of biological role, growth hormone plays an important role in growth control and is involved in the regulation of several anabolic processes. Implicated as an osmoregulatory substance important for seawater adaptation. This chain is Somatotropin (gh), found in Odontesthes argentinensis (Marine silverside).